The chain runs to 103 residues: NADH-quinone oxidoreductase subunit K (103 aa).

3 consecutive transmembrane segments (helical) span residues 4–24 (LTSY…GVIA), 28–48 (IFVI…FLIT), and 64–84 (MVIS…ILLF).

The protein belongs to the complex I subunit 4L family. NDH-1 is composed of 14 different subunits. Subunits NuoA, H, J, K, L, M, N constitute the membrane sector of the complex.

Its subcellular location is the cell inner membrane. The catalysed reaction is a quinone + NADH + 5 H(+)(in) = a quinol + NAD(+) + 4 H(+)(out). Functionally, NDH-1 shuttles electrons from NADH, via FMN and iron-sulfur (Fe-S) centers, to quinones in the respiratory chain. The immediate electron acceptor for the enzyme in this species is believed to be ubiquinone. Couples the redox reaction to proton translocation (for every two electrons transferred, four hydrogen ions are translocated across the cytoplasmic membrane), and thus conserves the redox energy in a proton gradient. This is NADH-quinone oxidoreductase subunit K from Aliarcobacter butzleri (strain RM4018) (Arcobacter butzleri).